Reading from the N-terminus, the 524-residue chain is Zinc finger protein 346 (524 aa).

7 consecutive Matrin-type zinc fingers follow at residues Thr-34–Arg-64, Asp-92–Arg-126, Lys-162–Lys-192, Gly-226–Met-260, Phe-286–Ser-316, Phe-343–Ser-373, and Phe-400–Ser-430. Zn(2+) contacts are provided by Cys-36, Cys-39, His-52, His-58, Cys-97, Cys-100, His-113, and His-119. Disordered regions lie at residues Ser-453–Pro-486 and Pro-494–Pro-513. Residues Pro-476–Pro-486 are compositionally biased toward low complexity.

Its subcellular location is the nucleus. It is found in the cytoplasm. Binds preferentially to dsRNA, but also to RNA-DNA hybrids. The chain is Zinc finger protein 346 from Xenopus laevis (African clawed frog).